Consider the following 305-residue polypeptide: Taste receptor type 2 member 136 (305 aa).

The Extracellular segment spans residues 1-9 (MMSFLVSIA). A helical membrane pass occupies residues 10–30 (SIAMLVKIVLGTFANVFIVLV). Residues 31–46 (NFTDCIKKRKFLLADR) lie on the Cytoplasmic side of the membrane. The chain crosses the membrane as a helical span at residues 47 to 67 (ILTVLAIFRFDLLWIILMNWS). Over 68 to 69 (SS) the chain is Extracellular. The helical transmembrane segment at 70 to 90 (VFHVGLYFQVRFCICVVWIVT) threads the bilayer. Residues 91-99 (NHFNTWLAN) lie on the Cytoplasmic side of the membrane. A helical transmembrane segment spans residues 100-120 (ILSILYLLKIDNFSNLIFLGL). Topologically, residues 121–127 (KGKIKCP) are extracellular. The helical transmembrane segment at 128 to 148 (YIVLLPCFVLLFPNLIMVTIC) threads the bilayer. Residues 149 to 176 (ETTQANGHQGNLTGKTKLTYFTNLIAMT) lie on the Cytoplasmic side of the membrane. Residues 177 to 197 (FTLGSLVPFTTFMICFLLLIC) traverse the membrane as a helical segment. Topologically, residues 198–223 (SLCKHLRTMRLYGKGSQGPSASTHIK) are extracellular. A helical membrane pass occupies residues 224 to 244 (VLQVLISFLLLFSMFILLLII). Topologically, residues 245 to 305 (SDYNYTKSLE…ARFWLKEKKP (61 aa)) are cytoplasmic.

The protein belongs to the G-protein coupled receptor T2R family.

It is found in the membrane. Its function is as follows. Putative taste receptor which may play a role in the perception of bitterness. This Mus musculus (Mouse) protein is Taste receptor type 2 member 136 (Tas2r136).